Consider the following 360-residue polypeptide: Histidinol-phosphate aminotransferase (360 aa).

Lys-211 bears the N6-(pyridoxal phosphate)lysine mark.

It belongs to the class-II pyridoxal-phosphate-dependent aminotransferase family. Histidinol-phosphate aminotransferase subfamily. As to quaternary structure, homodimer. Pyridoxal 5'-phosphate is required as a cofactor.

It carries out the reaction L-histidinol phosphate + 2-oxoglutarate = 3-(imidazol-4-yl)-2-oxopropyl phosphate + L-glutamate. It functions in the pathway amino-acid biosynthesis; L-histidine biosynthesis; L-histidine from 5-phospho-alpha-D-ribose 1-diphosphate: step 7/9. This Sodalis glossinidius (strain morsitans) protein is Histidinol-phosphate aminotransferase.